We begin with the raw amino-acid sequence, 681 residues long: Transmembrane protein 214-A (681 aa).

Disordered regions lie at residues 1-41 (MASG…GTAP) and 58-99 (KKQN…GSRQ). N-linked (GlcNAc...) asparagine glycans are attached at residues N300 and N324. 2 helical membrane-spanning segments follow: residues 471–491 (GFPW…FVFY) and 608–628 (LLLH…EAAV).

It belongs to the TMEM214 family. As to quaternary structure, constitutively interacts with CASP4; required for the localization of procaspase 4 to the ER.

It is found in the endoplasmic reticulum membrane. Functionally, critical mediator, in cooperation with CASP4, of endoplasmic reticulum-stress induced apoptosis. Required or the activation of CASP4 following endoplasmic reticulum stress. This chain is Transmembrane protein 214-A (tmem214-a), found in Xenopus laevis (African clawed frog).